The sequence spans 285 residues: Bifunctional protein FolD (285 aa).

Residues 163–165 and S188 each bind NADP(+); that span reads GRS.

Belongs to the tetrahydrofolate dehydrogenase/cyclohydrolase family. Homodimer.

It carries out the reaction (6R)-5,10-methylene-5,6,7,8-tetrahydrofolate + NADP(+) = (6R)-5,10-methenyltetrahydrofolate + NADPH. The enzyme catalyses (6R)-5,10-methenyltetrahydrofolate + H2O = (6R)-10-formyltetrahydrofolate + H(+). It participates in one-carbon metabolism; tetrahydrofolate interconversion. Catalyzes the oxidation of 5,10-methylenetetrahydrofolate to 5,10-methenyltetrahydrofolate and then the hydrolysis of 5,10-methenyltetrahydrofolate to 10-formyltetrahydrofolate. The chain is Bifunctional protein FolD from Lactococcus lactis subsp. cremoris (strain MG1363).